Here is a 305-residue protein sequence, read N- to C-terminus: UDP-3-O-acyl-N-acetylglucosamine deacetylase (305 aa).

Residues histidine 79, histidine 238, and aspartate 242 each contribute to the Zn(2+) site. Catalysis depends on histidine 265, which acts as the Proton donor.

Belongs to the LpxC family. Zn(2+) serves as cofactor.

The enzyme catalyses a UDP-3-O-[(3R)-3-hydroxyacyl]-N-acetyl-alpha-D-glucosamine + H2O = a UDP-3-O-[(3R)-3-hydroxyacyl]-alpha-D-glucosamine + acetate. Its pathway is glycolipid biosynthesis; lipid IV(A) biosynthesis; lipid IV(A) from (3R)-3-hydroxytetradecanoyl-[acyl-carrier-protein] and UDP-N-acetyl-alpha-D-glucosamine: step 2/6. In terms of biological role, catalyzes the hydrolysis of UDP-3-O-myristoyl-N-acetylglucosamine to form UDP-3-O-myristoylglucosamine and acetate, the committed step in lipid A biosynthesis. The protein is UDP-3-O-acyl-N-acetylglucosamine deacetylase of Pectobacterium atrosepticum (strain SCRI 1043 / ATCC BAA-672) (Erwinia carotovora subsp. atroseptica).